A 468-amino-acid chain; its full sequence is Probable acid phosphatase DIA3 (468 aa).

An N-terminal signal peptide occupies residues 1–20 (MVKPVIFAICLGVLLSKALS). The active-site Nucleophile is the His-76. Residues Asn-98, Asn-163, Asn-193, Asn-202, Asn-238, Asn-251, and Asn-316 are each glycosylated (N-linked (GlcNAc...) asparagine). The active-site Proton donor is the Asp-339. Asn-357, Asn-391, Asn-457, and Asn-462 each carry an N-linked (GlcNAc...) asparagine glycan.

The protein belongs to the histidine acid phosphatase family.

The enzyme catalyses a phosphate monoester + H2O = an alcohol + phosphate. This is Probable acid phosphatase DIA3 (DIA3) from Saccharomyces cerevisiae (strain ATCC 204508 / S288c) (Baker's yeast).